A 1103-amino-acid polypeptide reads, in one-letter code: Retinal guanylyl cyclase 1 (1103 aa).

The N-terminal stretch at 1-51 (MTACARRAGGLPDPGLCGPAWWAPSLPRLPRALPRLPLLLLLLLLQPPALS) is a signal peptide. Topologically, residues 52-462 (AVFTVGVLGP…PNNICGGGLE (411 aa)) are extracellular. N-linked (GlcNAc...) asparagine glycosylation is present at asparagine 297. The chain crosses the membrane as a helical span at residues 463–487 (PGLVFLGFLLVVGMGLAGAFLAHYV). Topologically, residues 488–1103 (RHRLLHMQMV…LEKARPGQFS (616 aa)) are cytoplasmic. The Protein kinase domain occupies 525–808 (QGSRSSLGAR…DHTFDLFKNI (284 aa)). Residues 880 to 1010 (TLYFSDIVGF…DTVNTASRME (131 aa)) form the Guanylate cyclase domain. A disordered region spans residues 1065–1103 (PIPKPPDLQPGSSNHGISLQEIPPERRRKLEKARPGQFS).

It belongs to the adenylyl cyclase class-4/guanylyl cyclase family. Homodimer; requires homodimerization for guanylyl cyclase activity. Interacts with RD3; promotes the exit of GUCY2D from the endoplasmic reticulum and its trafficking to the photoreceptor outer segments. Interaction with RD3 negatively regulates guanylate cyclase activity. As to expression, retina.

Its subcellular location is the photoreceptor outer segment membrane. It is found in the endoplasmic reticulum membrane. It carries out the reaction GTP = 3',5'-cyclic GMP + diphosphate. Activated by GUCA1A when free calcium ions concentration is low, and inhibited by GUCA1A when free calcium ions concentration is high. Negatively regulated by RD3; inhibits the basal and GUCA1A-stimulated guanylate cyclase activity. In terms of biological role, catalyzes the synthesis of cyclic GMP (cGMP) in rods and cones of photoreceptors. Plays an essential role in phototransduction, by mediating cGMP replenishment. May also participate in the trafficking of membrane-asociated proteins to the photoreceptor outer segment membrane. This Homo sapiens (Human) protein is Retinal guanylyl cyclase 1 (GUCY2D).